Reading from the N-terminus, the 121-residue chain is Large ribosomal subunit protein uL14 (121 aa).

The protein belongs to the universal ribosomal protein uL14 family. As to quaternary structure, part of the 50S ribosomal subunit. Forms a cluster with proteins L3 and L19. In the 70S ribosome, L14 and L19 interact and together make contacts with the 16S rRNA in bridges B5 and B8.

In terms of biological role, binds to 23S rRNA. Forms part of two intersubunit bridges in the 70S ribosome. This Legionella pneumophila (strain Paris) protein is Large ribosomal subunit protein uL14.